The following is a 347-amino-acid chain: Probable dual-specificity RNA methyltransferase RlmN (347 aa).

E93 (proton acceptor) is an active-site residue. Residues 100 to 323 (KAKRKTACVS…KKAGLNISTR (224 aa)) form the Radical SAM core domain. C107 and C334 are oxidised to a cystine. C114, C118, and C121 together coordinate [4Fe-4S] cluster. S-adenosyl-L-methionine-binding positions include 160–161 (GE), S192, 215–217 (SLT), and N291. C334 (S-methylcysteine intermediate) is an active-site residue.

The protein belongs to the radical SAM superfamily. RlmN family. [4Fe-4S] cluster is required as a cofactor.

The protein localises to the cytoplasm. It catalyses the reaction adenosine(2503) in 23S rRNA + 2 reduced [2Fe-2S]-[ferredoxin] + 2 S-adenosyl-L-methionine = 2-methyladenosine(2503) in 23S rRNA + 5'-deoxyadenosine + L-methionine + 2 oxidized [2Fe-2S]-[ferredoxin] + S-adenosyl-L-homocysteine. It carries out the reaction adenosine(37) in tRNA + 2 reduced [2Fe-2S]-[ferredoxin] + 2 S-adenosyl-L-methionine = 2-methyladenosine(37) in tRNA + 5'-deoxyadenosine + L-methionine + 2 oxidized [2Fe-2S]-[ferredoxin] + S-adenosyl-L-homocysteine. Its function is as follows. Specifically methylates position 2 of adenine 2503 in 23S rRNA and position 2 of adenine 37 in tRNAs. The protein is Probable dual-specificity RNA methyltransferase RlmN of Treponema denticola (strain ATCC 35405 / DSM 14222 / CIP 103919 / JCM 8153 / KCTC 15104).